The following is a 394-amino-acid chain: Elongation factor Tu (394 aa).

The 195-residue stretch at 10-204 (KPHVNVGTIG…FLDSYIPEPE (195 aa)) folds into the tr-type G domain. Residues 19–26 (GHVDHGKT) are G1. Residue 19–26 (GHVDHGKT) participates in GTP binding. Thr26 provides a ligand contact to Mg(2+). The tract at residues 60 to 64 (GITIN) is G2. Residues 81–84 (DCPG) are G3. Residues 81–85 (DCPGH) and 136–139 (NKCD) contribute to the GTP site. Residues 136–139 (NKCD) form a G4 region. The tract at residues 174-176 (SAL) is G5.

This sequence belongs to the TRAFAC class translation factor GTPase superfamily. Classic translation factor GTPase family. EF-Tu/EF-1A subfamily. As to quaternary structure, monomer.

Its subcellular location is the cytoplasm. It carries out the reaction GTP + H2O = GDP + phosphate + H(+). Functionally, GTP hydrolase that promotes the GTP-dependent binding of aminoacyl-tRNA to the A-site of ribosomes during protein biosynthesis. The chain is Elongation factor Tu from Salmonella arizonae (strain ATCC BAA-731 / CDC346-86 / RSK2980).